A 542-amino-acid polypeptide reads, in one-letter code: Glucose-6-phosphate isomerase 2 (542 aa).

E353 functions as the Proton donor in the catalytic mechanism. Catalysis depends on residues H384 and K505.

It belongs to the GPI family.

It is found in the cytoplasm. It catalyses the reaction alpha-D-glucose 6-phosphate = beta-D-fructose 6-phosphate. The protein operates within carbohydrate biosynthesis; gluconeogenesis. It participates in carbohydrate degradation; glycolysis; D-glyceraldehyde 3-phosphate and glycerone phosphate from D-glucose: step 2/4. Its function is as follows. Catalyzes the reversible isomerization of glucose-6-phosphate to fructose-6-phosphate. This is Glucose-6-phosphate isomerase 2 from Cupriavidus pinatubonensis (strain JMP 134 / LMG 1197) (Cupriavidus necator (strain JMP 134)).